The primary structure comprises 352 residues: Ferredoxin--NADP reductase 2 (352 aa).

7 residues coordinate FAD: Glu36, Lys44, Tyr48, Ile88, Leu123, Asp290, and Ser331.

The protein belongs to the ferredoxin--NADP reductase type 2 family. As to quaternary structure, homodimer. FAD serves as cofactor.

The enzyme catalyses 2 reduced [2Fe-2S]-[ferredoxin] + NADP(+) + H(+) = 2 oxidized [2Fe-2S]-[ferredoxin] + NADPH. The sequence is that of Ferredoxin--NADP reductase 2 from Exiguobacterium sibiricum (strain DSM 17290 / CCUG 55495 / CIP 109462 / JCM 13490 / 255-15).